Here is a 424-residue protein sequence, read N- to C-terminus: Protein CapL (424 aa).

Belongs to the UDP-glucose/GDP-mannose dehydrogenase family.

Its pathway is capsule biogenesis; capsule polysaccharide biosynthesis. Functionally, required for the biosynthesis of type 1 capsular polysaccharide. The sequence is that of Protein CapL (capL) from Staphylococcus aureus.